The following is a 441-amino-acid chain: Cysteine desulfurase, mitosomal (441 aa).

Pyridoxal 5'-phosphate is bound by residues 107–108 (AT), N189, Q217, and 237–239 (SGH). At K240 the chain carries N6-(pyridoxal phosphate)lysine. T277 is a pyridoxal 5'-phosphate binding site. Residue C367 is the Cysteine persulfide intermediate of the active site. C367 is a binding site for [2Fe-2S] cluster.

The protein belongs to the class-V pyridoxal-phosphate-dependent aminotransferase family. NifS/IscS subfamily. As to quaternary structure, interacts with ISD11. The cofactor is pyridoxal 5'-phosphate.

It localises to the mitosome. It catalyses the reaction (sulfur carrier)-H + L-cysteine = (sulfur carrier)-SH + L-alanine. Catalyzes the removal of elemental sulfur from cysteine to produce alanine. It supplies the inorganic sulfur for iron-sulfur (Fe-S) clusters in mitosomes. This is Cysteine desulfurase, mitosomal from Trachipleistophora hominis (Microsporidian parasite).